The chain runs to 212 residues: UDP-N-acetylglucosamine transferase subunit ALG13 (212 aa).

It belongs to the glycosyltransferase 28 family. Heterodimer with ALG14 to form a functional enzyme.

It is found in the endoplasmic reticulum. The enzyme catalyses an N-acetyl-alpha-D-glucosaminyl-diphospho-di-trans,poly-cis-dolichol + UDP-N-acetyl-alpha-D-glucosamine = an N,N'-diacetylchitobiosyl-diphospho-di-trans,poly-cis-dolichol + UDP + H(+). Its function is as follows. Involved in protein N-glycosylation. Essential for the second step of the dolichol-linked oligosaccharide pathway. The protein is UDP-N-acetylglucosamine transferase subunit ALG13 (ALG13) of Debaryomyces hansenii (strain ATCC 36239 / CBS 767 / BCRC 21394 / JCM 1990 / NBRC 0083 / IGC 2968) (Yeast).